Here is a 349-residue protein sequence, read N- to C-terminus: Protein-glutamate methylesterase/protein-glutamine glutaminase (349 aa).

The Response regulatory domain maps to 5-122; the sequence is RVLSVDDSAL…REGMLAYNEM (118 aa). D56 is modified (4-aspartylphosphate). Residues 152-344 enclose the CheB-type methylesterase domain; the sequence is LLSSEKLIAI…QQMLAKISAG (193 aa). Catalysis depends on residues S164, H190, and D286.

This sequence belongs to the CheB family. As to quaternary structure, interacts with CheA. Binds to a C-terminal pentapeptide sequence carried by certain receptors. Post-translationally, phosphorylated by CheA. Phosphorylation of the N-terminal regulatory domain activates the methylesterase activity.

The protein localises to the cytoplasm. It carries out the reaction [protein]-L-glutamate 5-O-methyl ester + H2O = L-glutamyl-[protein] + methanol + H(+). It catalyses the reaction L-glutaminyl-[protein] + H2O = L-glutamyl-[protein] + NH4(+). Its activity is regulated as follows. Methylesterase activity is activated via phosphorylation in response to negative chemotactic stimuli and is inhibited in the presence of attractants. Activation requires both CheA and CheW. Functionally, involved in chemotaxis. Part of a chemotaxis signal transduction system that modulates chemotaxis in response to various stimuli. Catalyzes the demethylation of specific methylglutamate residues introduced into the chemoreceptors (methyl-accepting chemotaxis proteins or MCP) by CheR. Also mediates the irreversible deamidation of specific glutamine residues to glutamic acid. Catalyzes its own deactivation by removing the activating phosphoryl group. This chain is Protein-glutamate methylesterase/protein-glutamine glutaminase, found in Escherichia coli (strain K12).